The chain runs to 396 residues: Acetate kinase (396 aa).

N7 contributes to the Mg(2+) binding site. ATP is bound at residue K14. Substrate is bound at residue R88. D145 serves as the catalytic Proton donor/acceptor. ATP contacts are provided by residues 205–209, 279–281, and 327–331; these read HLGNG, DFR, and GIGEN. Residue E381 coordinates Mg(2+).

It belongs to the acetokinase family. As to quaternary structure, homodimer. Mg(2+) is required as a cofactor. The cofactor is Mn(2+).

The protein localises to the cytoplasm. The enzyme catalyses acetate + ATP = acetyl phosphate + ADP. It functions in the pathway metabolic intermediate biosynthesis; acetyl-CoA biosynthesis; acetyl-CoA from acetate: step 1/2. In terms of biological role, catalyzes the formation of acetyl phosphate from acetate and ATP. Can also catalyze the reverse reaction. The chain is Acetate kinase from Campylobacter jejuni subsp. jejuni serotype O:23/36 (strain 81-176).